The following is a 236-amino-acid chain: Transcription repressor MYB6 (236 aa).

HTH myb-type domains lie at 9–61 and 62–116; these read KAHT…INYL and RPDL…KRKL. 2 consecutive DNA-binding regions (H-T-H motif) follow at residues 37–61 and 89–112; these read WRSLPKSAGLLRCGKSCRLRWINYL and WSLIAGRLPGRTDNEIKNYWNTHI. A disordered region spans residues 159 to 181; that stretch reads PKTENSSDNGASTSGTTTDEDLR. Positions 162 to 175 are enriched in polar residues; that stretch reads ENSSDNGASTSGTT.

As to quaternary structure, interacts with BHLH012/MYC1 and BHLH042/TT8. In terms of tissue distribution, expressed in roots, stems, flower buds, and siliques.

Its subcellular location is the nucleus. This Arabidopsis thaliana (Mouse-ear cress) protein is Transcription repressor MYB6 (MYB6).